A 963-amino-acid polypeptide reads, in one-letter code: Collagen alpha-1(I) chain (963 aa).

Positions 1–963 (GPMGPSGPRG…PGPPGPPGPP (963 aa)) are disordered. The span at 40-54 (NGDDGEAGKPGRPGE) shows a compositional bias: basic and acidic residues. Serine 82 bears the Phosphoserine mark. 2 stretches are compositionally biased toward low complexity: residues 90–106 (DAGP…PGEN) and 129–142 (PAGA…TGAA). Over residues 144–156 (PPGPTGPAGPPGF) the composition is skewed to pro residues. Positions 190 to 229 (AGAAGPAGNPGADGQPGAKGANGAPGIAGAPGFPGARGPS) are enriched in low complexity. Over residues 296-305 (GERGGPGARG) the composition is skewed to gly residues. 6 stretches are compositionally biased toward low complexity: residues 313–337 (AGPK…PGEA), 349–375 (KGIT…QDGR), 384–403 (ARGQ…AGEP), 482–495 (PRGA…DGAK), 555–569 (SGPS…ARGA), and 582–609 (AGFA…KGDA). Position 558 is a phosphoserine (serine 558). Pro residues predominate over residues 611 to 623 (PPGPAGPTGPPGP). Low complexity-rich tracts occupy residues 638–654 (SAGP…AGRV), 683–692 (ETGPAGRPGE), and 702–726 (AGEK…QGIA). Composition is skewed to pro residues over residues 767–777 (PPGPVGPPGIA) and 813–828 (AGPP…PGPV). The span at 849-863 (IGPVGARGPAGPQGP) shows a compositional bias: low complexity. The segment covering 864–878 (RGDKGETGEQGDRGI) has biased composition (basic and acidic residues). Residues 897–930 (PGEQGPSGASGPAGPRGPPGSAGAPGKDGINGIP) are compositionally biased toward low complexity. Positions 948-963 (VGPPGPPGPPGPPGPP) are enriched in pro residues.

It belongs to the fibrillar collagen family. As to quaternary structure, trimers of one alpha 2(I) and two alpha 1(I) chains. Post-translationally, prolines at the third position of the tripeptide repeating unit (G-X-Y) are hydroxylated in some or all of the chains. In terms of tissue distribution, forms the fibrils of tendon, ligaments and bones. In bones, the fibrils are mineralized with calcium hydroxyapatite.

The protein localises to the secreted. It localises to the extracellular space. The protein resides in the extracellular matrix. In terms of biological role, type I collagen is a member of group I collagen (fibrillar forming collagen). The polypeptide is Collagen alpha-1(I) chain (Tapirus terrestris (Lowland tapir)).